The following is an 841-amino-acid chain: Envelope glycoprotein H (841 aa).

The first 17 residues, 1–17 (MFALVLAVVILPLWTTA), serve as a signal peptide directing secretion. 3 N-linked (GlcNAc...) asparagine; by host glycosylation sites follow: asparagine 18, asparagine 45, and asparagine 217. Over 18-802 (NKSYVTPTPA…ERRQAIRMSG (785 aa)) the chain is Virion surface. The interaction with gL stretch occupies residues 246-309 (DSGRVEVNIG…DPGPSYRVYL (64 aa)). Residues asparagine 317, asparagine 499, asparagine 522, asparagine 760, and asparagine 783 are each glycosylated (N-linked (GlcNAc...) asparagine; by host). The helical transmembrane segment at 803–823 (QYLGASLGGAFLAVVGFGIIG) threads the bilayer. Residues 824–841 (WMLCGNSRLREYNKIPLT) are Intravirion-facing.

This sequence belongs to the herpesviridae glycoprotein H family. In terms of assembly, interacts with glycoprotein L (gL); this interaction is necessary for the correct processing and cell surface expression of gH. The heterodimer gH/gL seems to interact with gB trimers during fusion. Post-translationally, N-glycosylated, O-glycosylated, and sialylated.

It is found in the virion membrane. It localises to the host cell membrane. The protein localises to the host endosome membrane. The heterodimer glycoprotein H-glycoprotein L is required for the fusion of viral and plasma membranes leading to virus entry into the host cell. Following initial binding to host receptor, membrane fusion is mediated by the fusion machinery composed of gB and the heterodimer gH/gL. May also be involved in the fusion between the virion envelope and the outer nuclear membrane during virion morphogenesis. The sequence is that of Envelope glycoprotein H from Varicella-zoster virus (strain Dumas) (HHV-3).